We begin with the raw amino-acid sequence, 146 residues long: Large ribosomal subunit protein uL13 (146 aa).

A disordered region spans residues 126–146; the sequence is AGPKHPHAAQQPKVYEPRPRG.

It belongs to the universal ribosomal protein uL13 family. In terms of assembly, part of the 50S ribosomal subunit.

In terms of biological role, this protein is one of the early assembly proteins of the 50S ribosomal subunit, although it is not seen to bind rRNA by itself. It is important during the early stages of 50S assembly. This chain is Large ribosomal subunit protein uL13, found in Roseiflexus castenholzii (strain DSM 13941 / HLO8).